The sequence spans 1066 residues: Allene oxide synthase-lipoxygenase protein (1066 aa).

Residues 1 to 371 (MTWKNFGFEI…LKIGSLVPAG (371 aa)) form an allene oxide synthase region. Y353 serves as a coordination point for heme. Residues 372 to 1066 (QNAIYNVEVE…PERIPNGTAI (695 aa)) are arachidonate 8-lipoxygenase. Residues 374 to 490 (AIYNVEVETG…KDMVLFPGEA (117 aa)) form the PLAT domain. Ca(2+)-binding residues include H387, G389, T390, D391, N416, D417, E419, D452, and D454. The 576-residue stretch at 491 to 1066 (TLPFNEVPAI…PERIPNGTAI (576 aa)) folds into the Lipoxygenase domain. Residues H757, H762, H943, N947, and I1066 each coordinate Fe cation.

In the C-terminal section; belongs to the lipoxygenase family. Dimer. The cofactor is Ca(2+). Fe cation is required as a cofactor. Requires heme as cofactor.

It localises to the cytoplasm. It is found in the membrane. It carries out the reaction (5Z,8Z,11Z,14Z)-eicosatetraenoate + O2 = (8R)-hydroperoxy-(5Z,9E,11Z,14Z)-eicosatetraenoate. The catalysed reaction is (8R)-hydroperoxy-(5Z,9E,11Z,14Z)-eicosatetraenoate = 8,9-epoxy-(5Z,9E,11Z,14Z)-eicosatetraenoate + H2O. It catalyses the reaction (5Z,8Z,11Z,14Z,17Z)-eicosapentaenoate + O2 = (8R)-hydroperoxy-(5Z,9E,11Z,14Z,17Z)-eicosapentaenoate. The enzyme catalyses (4Z,7Z,10Z,13Z,16Z,19Z)-docosahexaenoate + O2 = 10-hydroperoxy-(4Z,7Z,11E,13Z,16Z,19Z)-docosahexaenoate. It carries out the reaction (8Z,11Z,14Z)-eicosatrienoate + O2 = (8R)-hydroperoxy-(9E,11Z,14Z)-eicosatrienoate. The catalysed reaction is (8Z,11Z,14Z)-eicosatrienoate + O2 = 10-hydroperoxy-(8Z,11Z,14Z)-eicosatrienoate. It catalyses the reaction (8Z,11Z,14Z)-eicosatrienoate + O2 = 11-hydroperoxy-(8Z,12E,14Z)-eicosatrienoate. It functions in the pathway lipid metabolism; arachidonate metabolism. The protein operates within lipid metabolism; fatty acid metabolism. With respect to regulation, lipoxygenase activity is stimulated by calcium, sodium, lithium and potassium ions. Calcium binding promotes interaction with membranes and thus facilitates access to substrates. Its function is as follows. Bifunctional enzyme which is responsible for allene oxide biosynthesis via a two-step reaction; first the lipoxygenase reaction that converts polyunsaturated fatty acids such as arachidonate ((5Z,8Z,11Z,14Z)-eicosatetraenoate) into a (8R)-hydroperoxide intermediate ((8R)-hydroperoxy-(5Z,9E,11Z,14Z)-eicosatetraenoate) followed by the allene oxide synthase reaction that converts the hydroperoxide intermediate ((8R)-hydroperoxy-(5Z,9E,11Z,14Z)-eicosatetraenoate) into the allene oxide (8,9-epoxy-(5Z,9E,11Z,14Z)-eicosatetraenoate). Shows preference for C20 or C22 highly polyunsaturated fatty acids and no activity with C18 fatty acids in vitro. Fatty acid allene oxides are intermediates in the formation of cyclopentenones or hydrolytic products in marine systems, most notably the prostanoid-related clavulones. This chain is Allene oxide synthase-lipoxygenase protein, found in Plexaura homomalla (Black sea rod).